The primary structure comprises 542 residues: Apolipoprotein N-acyltransferase (542 aa).

Transmembrane regions (helical) follow at residues 26–46 (ASVI…LSLV), 54–74 (IWCL…SWML), 89–109 (LLIS…VLCF), 113–133 (YWGA…VRYY), 163–183 (WAGQ…VLVF), and 187–207 (FSYG…GTYY). A CN hydrolase domain is found at 220–499 (LRVAIVQPGY…PDVLQVSVPV (280 aa)). The Proton acceptor role is filled by Glu264. The active site involves Lys349. The active-site Nucleophile is the Cys404. The chain crosses the membrane as a helical span at residues 509-529 (FGDAPLLFVAVSSVLGVVGYF).

This sequence belongs to the CN hydrolase family. Apolipoprotein N-acyltransferase subfamily.

It localises to the cell inner membrane. It catalyses the reaction N-terminal S-1,2-diacyl-sn-glyceryl-L-cysteinyl-[lipoprotein] + a glycerophospholipid = N-acyl-S-1,2-diacyl-sn-glyceryl-L-cysteinyl-[lipoprotein] + a 2-acyl-sn-glycero-3-phospholipid + H(+). Its pathway is protein modification; lipoprotein biosynthesis (N-acyl transfer). Functionally, catalyzes the phospholipid dependent N-acylation of the N-terminal cysteine of apolipoprotein, the last step in lipoprotein maturation. This chain is Apolipoprotein N-acyltransferase, found in Chlamydia muridarum (strain MoPn / Nigg).